Reading from the N-terminus, the 411-residue chain is uncharacterized protein (411 aa).

2 disordered regions span residues M1–E91 and K253–P280. The span at E46–M57 shows a compositional bias: acidic residues. Over residues S74 to S86 the composition is skewed to low complexity. The segment covering R258–P272 has biased composition (basic and acidic residues). S279 carries the phosphoserine modification.

As to expression, widely expressed, highest levels in cerebellum, brain cortex, hippocampus, pons, putamen and amygdala. Highly expressed in neurons, but also present in glial cells. Slightly higher expression in the dorsolateral prefrontal cortex of schizophrenic patients compared to control individuals.

It localises to the cytoplasm. This is an uncharacterized protein from Homo sapiens (Human).